The sequence spans 104 residues: Iron-sulfur cluster assembly protein CyaY (104 aa).

This sequence belongs to the frataxin family.

In terms of biological role, involved in iron-sulfur (Fe-S) cluster assembly. May act as a regulator of Fe-S biogenesis. This is Iron-sulfur cluster assembly protein CyaY from Aeromonas hydrophila subsp. hydrophila (strain ATCC 7966 / DSM 30187 / BCRC 13018 / CCUG 14551 / JCM 1027 / KCTC 2358 / NCIMB 9240 / NCTC 8049).